The primary structure comprises 255 residues: Large ribosomal subunit protein uL4 (255 aa).

The protein belongs to the universal ribosomal protein uL4 family. In terms of assembly, part of the 50S ribosomal subunit.

In terms of biological role, one of the primary rRNA binding proteins, this protein initially binds near the 5'-end of the 23S rRNA. It is important during the early stages of 50S assembly. It makes multiple contacts with different domains of the 23S rRNA in the assembled 50S subunit and ribosome. Forms part of the polypeptide exit tunnel. In Pyrococcus furiosus (strain ATCC 43587 / DSM 3638 / JCM 8422 / Vc1), this protein is Large ribosomal subunit protein uL4.